Here is a 1887-residue protein sequence, read N- to C-terminus: MSPQWMPQNIQKRLLLYVLQQLSLFSEIDLPNLEEVSLNNIVLKNVSIDPDKVGKLPGCNLRYGQVGSLELNGGVMGGVSIDANNVEIVIAPDFDMKEEISNNVQFSLAQSTADLANTLMVDKSSNEYESSDDETDTVMPSVSSKSRSNSSSSGTSARTRPSALSGVMTKAVEMALSRLQVKVTNLNIKIVSESTDLVLKVDEALLNTINGTRHVKIKGVKLITLKPEVNPGESSDDSPEQESPKESENSNTSDDDEDNDNDYGDESLMNSMVFTHDEASSIYMSATSQSFNKPSNNDDTAPTETAPDNKESPILLHIDDIDIEFEGLSNITNLEIDVGEIKVAAVPITPTIISIFNNISHNLKLKYYQQRKSNIHKQRFKSNLSFPQYADDNDEIEDENEQMPILDDNGASSGPFFDKLRIHNIIVSATSALLPTGQFASASNSLNFIFHNLNIKYKNEALIYGGIEVFKIVKITNDQEIEVLKFNNSTAPTNTEPNPSDEPAGSTSAPSNSSKADIRFEAFTKLDNEIKHLEFTSLFSKQAFVNLDKSVLLLLSNFGISVSSIYDSYNTMRSTMNSVNSFKANTNINGEPRDASSIGVAKESNLQIILQTASTTINIKLSDNLNLKAVIYPISFNLLKQGMSINKILISTVSSGIETLISTLSNIQLSTKSQEFKSFSNKSGYSKGSNDSFPRETILGSNLTLSLSKISSKASLKELKLLIGDFADFASSWQLLSLQVNSLKNSVKDKGFVMSSKSNKNESSSMLSNSMYFNQRRSRRSNFNNPSLVNTNRSNLVSFRLYVDHIEFCITNVLPKLGDFDFQLEKVSFYKLNNDIQGSIHTVKVDRNLGNGEAVNDFIYEFQRKRCNKINIPLILVNIKSNDKANTIDISLRNFLIEYYTRWLELLEKEIDENAVLHDITGQKRESSSLNSPSKRLDIRFSLYDCVIGLNPGRLDCKSLLIINKGNSDVTFGLHQFYIKSSLRNLSLLIIDDVKNINLSKTDREAASKPTSTAYISPLSWFTSIGYISVGNINCIHLGITVNTGIQEIIERNEKLGLQDNLALLDIKINSDEHQLDLCADSAHVLIQMINDLKPPLSFTDEEKIKVTVNDPINLLDEIGQNVFLNESIMKSASHSETFENSTISRKNSDANDINIVEEYYDGSHTSSQSLENGFNKLSISESDNAKDDASSFSFDEEHFSSNGADRNNTEVFPIKMNINLSKTKIYLYDGFDWKGTRKTIKGAVKRVEAQALQELERVKEHGSRKHLKRNMQVTFDEPESNATEDNYGNDQENDDGNSSDNQSLIGETLFQSIHLSVPKGSNPSSLTKNINKSVQNYFDNEDSNDSSINYNVETGRNYKNLKLRRSKNHKISIDLKNIEVNMAILTTRDPRRDKDVPDVKYEVTNSIDLRIEDIDIYDNIPNSTWNKFLSYMNSLGEREIGTSMLKASITNVRPNPELCSTEAMIDISILPIRLHVDQDALDFFIRFFDFKDKRFELPIDEIIYIQMFKMSSIKLKLDYKPKKIDYSGIRSGKVSEFVNFFILDGSELSLPKLTLYGILGMPMLGAELTKTWAPNIQQTQLSGLLAGLSPFRSIVNIGGGFKDLVAVPIKEYRKDGRLMRSLQKGTSKFAKTTGYELLNLGAKLASGTQVVLEQSEQVFGGEGSSARSPKNKNDKHGKIEDDDNEDIYTSGNTSKGNSNLLASSQLLNKTIAVDNDPYGKKKLYSYIELDESDDIDDKILENSLLLMNPKDIKESRQLQVVSEESELQELDEKEELDDEDAIKLVSLYSNQPENTQQGLKLAYKSLGENFEITKKAVNNLRKELNASSNVQESLKSMVKSSPILIIRPMIGTTEALSKALMGISNEIDSNHIIESKDKYRYDASEK.

Disordered stretches follow at residues 125–164 (SNEY…PSAL), 227–267 (PEVN…GDES), 288–310 (SQSF…PDNK), 487–513 (NNST…PSNS), 1188–1209 (DDAS…DRNN), 1260–1304 (KEHG…DNQS), and 1659–1696 (VFGG…NTSK). The segment covering 141 to 162 (SVSSKSRSNSSSSGTSARTRPS) has biased composition (low complexity). Acidic residues predominate over residues 253-265 (SDDDEDNDNDYGD). Polar residues-rich tracts occupy residues 288–303 (SQSF…TAPT) and 487–498 (NNSTAPTNTEPN). The segment covering 1188-1200 (DDASSFSFDEEHF) has biased composition (basic and acidic residues). Polar residues predominate over residues 1281-1291 (SNATEDNYGND).

It belongs to the ATG2 family.

It localises to the preautophagosomal structure membrane. The protein resides in the endoplasmic reticulum membrane. The enzyme catalyses a 1,2-diacyl-sn-glycero-3-phosphocholine(in) = a 1,2-diacyl-sn-glycero-3-phosphocholine(out). It carries out the reaction a 1,2-diacyl-sn-glycero-3-phospho-L-serine(in) = a 1,2-diacyl-sn-glycero-3-phospho-L-serine(out). The catalysed reaction is a 1,2-diacyl-sn-glycero-3-phosphoethanolamine(in) = a 1,2-diacyl-sn-glycero-3-phosphoethanolamine(out). In terms of biological role, lipid transfer protein required for autophagosome completion and peroxisome degradation. Tethers the edge of the isolation membrane (IM) to the endoplasmic reticulum (ER) and mediates direct lipid transfer from ER to IM for IM expansion. ATG2 binds to the ER exit site (ERES), which is the membrane source for autophagosome formation, using basic residues in its N-terminal region (NR) and to the expanding edge of the IM through its C-terminal region. The latter binding is assisted by an ATG18-PtdIns3P interaction. ATG2 then extracts phospholipids from the membrane source using its NR and transfers them to ATG9 to the IM through its predicted beta-sheet-rich structure for membrane expansion. The chain is Autophagy-related protein 2 (ATG2) from Debaryomyces hansenii (strain ATCC 36239 / CBS 767 / BCRC 21394 / JCM 1990 / NBRC 0083 / IGC 2968) (Yeast).